Reading from the N-terminus, the 93-residue chain is Small ribosomal subunit protein uS19 (93 aa).

It belongs to the universal ribosomal protein uS19 family.

Its function is as follows. Protein S19 forms a complex with S13 that binds strongly to the 16S ribosomal RNA. The sequence is that of Small ribosomal subunit protein uS19 from Ehrlichia canis (strain Jake).